Reading from the N-terminus, the 395-residue chain is Succinyl-diaminopimelate desuccinylase (395 aa).

H74 contacts Zn(2+). The active site involves D76. A Zn(2+)-binding site is contributed by D107. The active-site Proton acceptor is the E141. Zn(2+) contacts are provided by E142, E170, and H368.

It belongs to the peptidase M20A family. DapE subfamily. Homodimer. Zn(2+) serves as cofactor. Co(2+) is required as a cofactor.

The enzyme catalyses N-succinyl-(2S,6S)-2,6-diaminopimelate + H2O = (2S,6S)-2,6-diaminopimelate + succinate. It participates in amino-acid biosynthesis; L-lysine biosynthesis via DAP pathway; LL-2,6-diaminopimelate from (S)-tetrahydrodipicolinate (succinylase route): step 3/3. Catalyzes the hydrolysis of N-succinyl-L,L-diaminopimelic acid (SDAP), forming succinate and LL-2,6-diaminopimelate (DAP), an intermediate involved in the bacterial biosynthesis of lysine and meso-diaminopimelic acid, an essential component of bacterial cell walls. This chain is Succinyl-diaminopimelate desuccinylase, found in Brucella abortus (strain S19).